The chain runs to 120 residues: NAD(P)H-quinone oxidoreductase subunit 3, chloroplastic (120 aa).

Helical transmembrane passes span isoleucine 9–glycine 29, methionine 64–methionine 84, and valine 88–leucine 108.

Belongs to the complex I subunit 3 family. NDH is composed of at least 16 different subunits, 5 of which are encoded in the nucleus.

It is found in the plastid. The protein resides in the chloroplast thylakoid membrane. It carries out the reaction a plastoquinone + NADH + (n+1) H(+)(in) = a plastoquinol + NAD(+) + n H(+)(out). The catalysed reaction is a plastoquinone + NADPH + (n+1) H(+)(in) = a plastoquinol + NADP(+) + n H(+)(out). Functionally, NDH shuttles electrons from NAD(P)H:plastoquinone, via FMN and iron-sulfur (Fe-S) centers, to quinones in the photosynthetic chain and possibly in a chloroplast respiratory chain. The immediate electron acceptor for the enzyme in this species is believed to be plastoquinone. Couples the redox reaction to proton translocation, and thus conserves the redox energy in a proton gradient. The polypeptide is NAD(P)H-quinone oxidoreductase subunit 3, chloroplastic (Fagopyrum esculentum subsp. ancestrale (Wild buckwheat)).